Reading from the N-terminus, the 95-residue chain is Large ribosomal subunit protein uL23 (95 aa).

The protein belongs to the universal ribosomal protein uL23 family. Part of the 50S ribosomal subunit. Contacts protein L29, and trigger factor when it is bound to the ribosome.

In terms of biological role, one of the early assembly proteins it binds 23S rRNA. One of the proteins that surrounds the polypeptide exit tunnel on the outside of the ribosome. Forms the main docking site for trigger factor binding to the ribosome. The chain is Large ribosomal subunit protein uL23 from Coxiella burnetii (strain RSA 493 / Nine Mile phase I).